A 283-amino-acid polypeptide reads, in one-letter code: Bifunctional protein FolD (283 aa).

NADP(+)-binding positions include glycine 164 to serine 166, serine 189, and isoleucine 230.

It belongs to the tetrahydrofolate dehydrogenase/cyclohydrolase family. As to quaternary structure, homodimer.

The catalysed reaction is (6R)-5,10-methylene-5,6,7,8-tetrahydrofolate + NADP(+) = (6R)-5,10-methenyltetrahydrofolate + NADPH. It catalyses the reaction (6R)-5,10-methenyltetrahydrofolate + H2O = (6R)-10-formyltetrahydrofolate + H(+). It functions in the pathway one-carbon metabolism; tetrahydrofolate interconversion. In terms of biological role, catalyzes the oxidation of 5,10-methylenetetrahydrofolate to 5,10-methenyltetrahydrofolate and then the hydrolysis of 5,10-methenyltetrahydrofolate to 10-formyltetrahydrofolate. The sequence is that of Bifunctional protein FolD from Lactobacillus delbrueckii subsp. bulgaricus (strain ATCC BAA-365 / Lb-18).